Reading from the N-terminus, the 422-residue chain is Serine--tRNA ligase (422 aa).

An L-serine-binding site is contributed by 229 to 231; that stretch reads TAE. 258–260 contributes to the ATP binding site; that stretch reads RRE. Glu-281 is a binding site for L-serine. Position 345–348 (345–348) interacts with ATP; the sequence is EISS. Residue Ser-379 participates in L-serine binding.

This sequence belongs to the class-II aminoacyl-tRNA synthetase family. Type-1 seryl-tRNA synthetase subfamily. Homodimer. The tRNA molecule binds across the dimer.

Its subcellular location is the cytoplasm. The catalysed reaction is tRNA(Ser) + L-serine + ATP = L-seryl-tRNA(Ser) + AMP + diphosphate + H(+). It catalyses the reaction tRNA(Sec) + L-serine + ATP = L-seryl-tRNA(Sec) + AMP + diphosphate + H(+). The protein operates within aminoacyl-tRNA biosynthesis; selenocysteinyl-tRNA(Sec) biosynthesis; L-seryl-tRNA(Sec) from L-serine and tRNA(Sec): step 1/1. Catalyzes the attachment of serine to tRNA(Ser). Is also able to aminoacylate tRNA(Sec) with serine, to form the misacylated tRNA L-seryl-tRNA(Sec), which will be further converted into selenocysteinyl-tRNA(Sec). The polypeptide is Serine--tRNA ligase (Methanosarcina mazei (strain ATCC BAA-159 / DSM 3647 / Goe1 / Go1 / JCM 11833 / OCM 88) (Methanosarcina frisia)).